A 206-amino-acid polypeptide reads, in one-letter code: Large ribosomal subunit protein uL4 (206 aa).

A compositionally biased stretch (basic residues) spans 66–77 (QKGTGRARHHSA). The segment at 66-96 (QKGTGRARHHSARAPQFRGGGQAHGPVVRSH) is disordered.

This sequence belongs to the universal ribosomal protein uL4 family. As to quaternary structure, part of the 50S ribosomal subunit.

One of the primary rRNA binding proteins, this protein initially binds near the 5'-end of the 23S rRNA. It is important during the early stages of 50S assembly. It makes multiple contacts with different domains of the 23S rRNA in the assembled 50S subunit and ribosome. In terms of biological role, forms part of the polypeptide exit tunnel. This chain is Large ribosomal subunit protein uL4, found in Brucella anthropi (strain ATCC 49188 / DSM 6882 / CCUG 24695 / JCM 21032 / LMG 3331 / NBRC 15819 / NCTC 12168 / Alc 37) (Ochrobactrum anthropi).